The chain runs to 309 residues: Aspartate carbamoyltransferase catalytic subunit (309 aa).

Residues Arg-55 and Thr-56 each coordinate carbamoyl phosphate. Lys-85 serves as a coordination point for L-aspartate. Carbamoyl phosphate contacts are provided by Arg-106, His-135, and Gln-138. Residues Arg-168 and Arg-230 each coordinate L-aspartate. Leu-268 and Pro-269 together coordinate carbamoyl phosphate.

It belongs to the aspartate/ornithine carbamoyltransferase superfamily. ATCase family. As to quaternary structure, heterododecamer (2C3:3R2) of six catalytic PyrB chains organized as two trimers (C3), and six regulatory PyrI chains organized as three dimers (R2).

The enzyme catalyses carbamoyl phosphate + L-aspartate = N-carbamoyl-L-aspartate + phosphate + H(+). It functions in the pathway pyrimidine metabolism; UMP biosynthesis via de novo pathway; (S)-dihydroorotate from bicarbonate: step 2/3. Its function is as follows. Catalyzes the condensation of carbamoyl phosphate and aspartate to form carbamoyl aspartate and inorganic phosphate, the committed step in the de novo pyrimidine nucleotide biosynthesis pathway. In Vibrio vulnificus (strain YJ016), this protein is Aspartate carbamoyltransferase catalytic subunit.